Consider the following 342-residue polypeptide: uncharacterized protein (342 aa).

10 consecutive transmembrane segments (helical) span residues phenylalanine 8–phenylalanine 28, isoleucine 39–isoleucine 59, serine 79–isoleucine 99, isoleucine 108–methionine 128, glycine 142–proline 162, isoleucine 175–isoleucine 195, alanine 207–isoleucine 227, phenylalanine 242–isoleucine 262, alanine 276–valine 296, and isoleucine 304–leucine 324.

The protein belongs to the tellurite-resistance/dicarboxylate transporter (TDT) family.

It is found in the cell membrane. This is an uncharacterized protein from Methanocaldococcus jannaschii (strain ATCC 43067 / DSM 2661 / JAL-1 / JCM 10045 / NBRC 100440) (Methanococcus jannaschii).